Here is a 200-residue protein sequence, read N- to C-terminus: Superoxide dismutase [Mn], mitochondrial (200 aa).

Positions 27, 72, 157, and 161 each coordinate Mn(2+).

This sequence belongs to the iron/manganese superoxide dismutase family. Mn(2+) serves as cofactor.

It localises to the mitochondrion matrix. It carries out the reaction 2 superoxide + 2 H(+) = H2O2 + O2. Its function is as follows. Destroys superoxide anion radicals which are normally produced within the cells and which are toxic to biological systems. In Agaricus bisporus (White button mushroom), this protein is Superoxide dismutase [Mn], mitochondrial (sod).